The following is a 468-amino-acid chain: 6-phospho-beta-galactosidase (468 aa).

Positions 19, 116, 159, 160, and 297 each coordinate D-galactose 6-phosphate. The active-site Proton donor is Glu160. Glu375 (nucleophile) is an active-site residue. Residues Ser428, Trp429, Lys435, and Tyr437 each coordinate D-galactose 6-phosphate.

Belongs to the glycosyl hydrolase 1 family.

The catalysed reaction is a 6-phospho-beta-D-galactoside + H2O = D-galactose 6-phosphate + an alcohol. It participates in carbohydrate metabolism; lactose degradation; D-galactose 6-phosphate and beta-D-glucose from lactose 6-phosphate: step 1/1. The polypeptide is 6-phospho-beta-galactosidase (Streptococcus pyogenes serotype M2 (strain MGAS10270)).